We begin with the raw amino-acid sequence, 791 residues long: IQ motif and ubiquitin-like domain-containing protein (791 aa).

The disordered stretch occupies residues 1–73; the sequence is MSNQQEKYEA…SDQSFSSLEP (73 aa). A Ubiquitin-like domain is found at 131–207; sequence ATVKVVLIPV…VQVEIFSTNP (77 aa). Positions 338 to 367 constitute an IQ domain; it reads RLKAVIVIQTYYRQWHAKIFVENLRRQKSL.

In terms of assembly, component of the axonemal radial spoke 1 (RS1) complex, at least composed of spoke head proteins RSPH1, RSPH3, RSPH9 and the cilia-specific component RSPH4A or sperm-specific component RSPH6A, spoke stalk proteins RSPH14, DNAJB13, DYDC1, ROPN1L and NME5, and the anchor protein IQUB. Does not appear to be part of radial spoke complexes 2 or 3 (RS2 or RS3). Interacts with CALM1. Interacts with DNAJB13. Interacts with DYNLL2. Interacts with NME5. Interacts with RSPH3. Interacts with RSPH9. Interacts with ZMYND10. Interacts with calmodulin; the interaction occurs in conditions of low but not high calcium.

It is found in the cytoplasm. Its subcellular location is the cytoskeleton. The protein resides in the flagellum axoneme. The protein localises to the cell projection. It localises to the cilium. Functionally, adapter protein that anchors the radial spoke 1 (RS1) complex to the A microtubule of outer doublet microtubules in axonemes. The triple radial spokes (RS1, RS2 and RS3) are required to modulate beating of the sperm flagellum. May play a role in inhibiting signaling via MAPK1/ERK2 and MAPK3/ERK1. Additionally, may play a role in the functioning of cilia. Not required for the functioning of tracheal or ependymal cilia. The sequence is that of IQ motif and ubiquitin-like domain-containing protein (IQUB) from Homo sapiens (Human).